A 1663-amino-acid polypeptide reads, in one-letter code: Complement C3 (1663 aa).

The N-terminal stretch at 1 to 22 (MGPTSGPSLLLLLLTHLPLALG) is a signal peptide. Phosphoserine; by FAM20C is present on residues Ser38 and Ser70. An N-linked (GlcNAc...) asparagine glycan is attached at Asn85. A phosphoserine; by FAM20C mark is found at Ser297 and Ser303. 13 cysteine pairs are disulfide-bonded: Cys559/Cys816, Cys627/Cys662, Cys693/Cys720, Cys694/Cys727, Cys707/Cys728, Cys873/Cys1513, Cys1101/Cys1158, Cys1358/Cys1489, Cys1389/Cys1458, Cys1506/Cys1511, Cys1518/Cys1590, Cys1537/Cys1661, and Cys1637/Cys1646. Ser672 carries the post-translational modification Phosphoserine; by FAM20C. The Anaphylatoxin-like domain occupies 693–728 (CCEDGMRENPMRFSCQRRTRFISLGEACKKVFLDCC). Residue Asn939 is glycosylated (N-linked (GlcNAc...) asparagine). Residues 954–973 (REGVQKEDIPPADLSDQVPD) are disordered. Phosphoserine; by FAM20C is present on Ser968. The segment at residues 1010-1013 (CGEQ) is a cross-link (isoglutamyl cysteine thioester (Cys-Gln)). At Ser1321 the chain carries Phosphoserine; by FAM20C. The 144-residue stretch at 1518-1661 (CFIQKSDDKV…FTESMVVFGC (144 aa)) folds into the NTR domain. Ser1573 is subject to Phosphoserine; by FAM20C. The N-linked (GlcNAc...) asparagine glycan is linked to Asn1617. Residues 1634–1659 (EDECQDEENQKQCQDLGAFTESMVVF) are interaction with CFP/properdin.

As to quaternary structure, in absence of complement activation, the C3 precursor is first processed by the removal of 4 Arg residues, forming two chains, beta and alpha, linked by a disulfide bond. In terms of assembly, complement C3b is composed of complement C3b and complement C3 beta chains that are associated via disulfide bonds. Non-enzymatic component of the C5 convertase, also named C4bC2bC3b, composed of the serine protease complement C2b (C2), complement C3b, as well as complement C4b (C4). Non-enzymatic component of the C5 convertase of the alternative complement pathways composed of the serine protease complement CFB and complement C3b. Interacts with CFP; interaction takes place together with CFB in the alternative complement system and allows the complex to become active. Interacts with CR1 (via Sushi 8 and Sushi 9 domains). Interacts with CFH. Interacts with CFH. Interacts with CR2. As to quaternary structure, during pregnancy, C3dg exists as a complex (probably a 2:2:2 heterohexamer) with AGT and the proform of PRG2. Interacts with CR2 (via the N-terminal Sushi domains 1 and 2). In terms of assembly, (Microbial infection) C3b interacts with herpes simplex virus 1 (HHV-1) and herpes simplex virus 2 (HHV-2) envelope glycoprotein C; this interaction inhibits the activation of the complement system. (Microbial infection) Interacts with Staphylococcus aureus immunoglobulin-binding protein Sbi; this interaction prevents the association between C3dg and CR2. As to quaternary structure, (Microbial infection) Interacts with Staphylococcus aureus protein Fib. Post-translationally, C3 precursor is first processed by the removal of 4 Arg residues, forming two chains, beta and alpha, linked by a disulfide bond. During activation of the complement systems, the alpha chain is cleaved into C3a and C3b by the C3 convertase: C3b stays linked to the beta chain, while C3a is released in the plasma. The alpha chain is cleaved by the serine protease complement C2b component of the C3 convertase to generate C3a and C3b following activation by the classical, lectin and GZMK complement systems. The alpha chain is cleaved by CFB component of the C3 convertase to generate C3a and C3b following activation by the alternative complement system. In terms of processing, C3a is further processed by carboxypeptidases to release the C-terminal arginine residue generating the acylation stimulating protein (ASP). Levels of ASP are increased in adipocytes in the postprandial period and by insulin and dietary chylomicrons. Complement C3b is rapidly split in two positions by factor I (CFI) and a cofactor (CFH) to form iC3b (inactivated C3b) and C3f which is released. CFI and CFH catalyze proteolytic degradation of already-deposited complement C3b. Then iC3b is slowly cleaved (possibly by CFI) to form C3c (beta chain + alpha' chain fragment 1 + alpha' chain fragment 2), C3dg and C3f. Other proteases produce other fragments such as C3d or C3g. Post-translationally, upon activation, the internal thioester bond reacts with carbohydrate antigens on the target surface to form amide or ester bonds, leading to covalent association with the surface of pathogens. In terms of processing, complement C3b interacts with complement C4b via a thioester linkage. Phosphorylated by FAM20C in the extracellular medium. Post-translationally, (Microbial infection) C3 is cleaved by Staphylococcus aureus aureolysin; this cleavage renders C3a and C3b inactive. C3b is rapidly degraded by host factors CFH and CFI preventing its deposition on the bacterial surface while C3a is further inactivated by aureolysin. In terms of processing, (Microbial infection) Complement C3 beta chain is cleaved and inactivated by S.pyogenes SpeB. (Microbial infection) Cleaved by N.meningitidis NalP between Leu-744 and Gly-745, generating a slightly shorter C3 alpha form and a slightly longer C3 beta form. The C3b-like fragment is degraded in the presence of the complement regulators CFH and CFI, preventing its deposition on the bacterial surface. As to expression, plasma. Produced in adipocytes and released into the plasma during both the fasting and postprandial periods.

It is found in the secreted. It localises to the cell surface. Complement activation is inhibited by VSIG4. Precursor of non-enzymatic components of the classical, alternative, lectin and GZMK complement pathways, which consist in a cascade of proteins that leads to phagocytosis and breakdown of pathogens and signaling that strengthens the adaptive immune system. In terms of biological role, non-enzymatic component of C5 convertase. Generated following cleavage by C3 convertase, it covalently attaches to the surface of pathogens, where it acts as an opsonin that marks the surface of antigens for removal. Complement C3b binds covalently via its reactive thioester, to cell surface carbohydrates or immune aggregates. Together with complement C4b, it then recruits the serine protease complement C2b to form the C5 convertase, which cleaves and activate C5, the next component of the complement pathways. In the alternative complement pathway, recruits the serine protease CFB to form the C5 convertase that cleaves and activates C5. Functionally, mediator of local inflammatory process released following cleavage by C3 convertase. Acts by binding to its receptor, C3AR1, activating G protein-coupled receptor signaling, promoting the phosphorylation, ARRB2-mediated internalization and endocytosis of C3AR1. C3a anaphylatoxin stimulates the activation of immune cells such as mast cells and basophilic leukocytes to release inflammation agents, such as cytokines, chemokines and histamine, which promote inflammation development. Also acts as potent chemoattractant for the migration of macrophages and neutrophils to the inflamed tissues, resulting in neutralization of the inflammatory triggers by multiple ways, such as phagocytosis and generation of reactive oxidants. Its function is as follows. Adipogenic hormone that stimulates triglyceride synthesis and glucose transport in adipocytes, regulating fat storage and playing a role in postprandial triglyceride clearance. Appears to stimulate triglyceride synthesis via activation of the PLC, MAPK and AKT signaling pathways. Acts by binding to its receptor, C5AR2, activating G protein-coupled receptor signaling, promoting the phosphorylation, ARRB2-mediated internalization and endocytosis of C5AR2. Acts as a chemoattractant for neutrophils in chronic inflammation. This chain is Complement C3, found in Homo sapiens (Human).